The primary structure comprises 419 residues: Carboxypeptidase A1 (419 aa).

The first 16 residues, 1–16 (MRGLLVLSVLLGAVFG), serve as a signal peptide directing secretion. The propeptide at 17–110 (KEDFVGHQVL…QEQMFAFRSR (94 aa)) is activation peptide. The region spanning 121 to 414 (TYHTLEEIYD…LALLTIMEHT (294 aa)) is the Peptidase M14 domain. Positions 179 and 182 each coordinate Zn(2+). Residues 179–182 (HSRE), R237, and 254–255 (NR) each bind substrate. C248 and C271 are oxidised to a cystine. A Zn(2+)-binding site is contributed by H306. Substrate contacts are provided by residues 307–308 (SY) and Y358. E380 acts as the Proton donor/acceptor in catalysis.

It belongs to the peptidase M14 family. As to quaternary structure, monomer. May form a complex with proelastase 2. Zn(2+) is required as a cofactor.

Its subcellular location is the secreted. It carries out the reaction Release of a C-terminal amino acid, but little or no action with -Asp, -Glu, -Arg, -Lys or -Pro.. The catalysed reaction is leukotriene C4 + H2O = leukotriene F4 + glycine. Inhibited by interaction with the S.magnifica carboxypeptidase inhibitor SmCI. Carboxypeptidase that catalyzes the release of a C-terminal amino acid, but has little or no action with -Asp, -Glu, -Arg, -Lys or -Pro. Catalyzes the conversion of leukotriene C4 to leukotriene F4 via the hydrolysis of an amide bond. This is Carboxypeptidase A1 from Homo sapiens (Human).